The following is a 500-amino-acid chain: Glutamate--tRNA ligase (500 aa).

The 'HIGH' region motif lies at 12–22; the sequence is PSPTGHLHIGN. A 'KMSKS' region motif is present at residues 259-263; the sequence is KLSKR. K262 contacts ATP.

This sequence belongs to the class-I aminoacyl-tRNA synthetase family. Glutamate--tRNA ligase type 1 subfamily. As to quaternary structure, monomer.

It localises to the cytoplasm. The enzyme catalyses tRNA(Glu) + L-glutamate + ATP = L-glutamyl-tRNA(Glu) + AMP + diphosphate. Its function is as follows. Catalyzes the attachment of glutamate to tRNA(Glu) in a two-step reaction: glutamate is first activated by ATP to form Glu-AMP and then transferred to the acceptor end of tRNA(Glu). This is Glutamate--tRNA ligase from Lactobacillus delbrueckii subsp. bulgaricus (strain ATCC BAA-365 / Lb-18).